Reading from the N-terminus, the 293-residue chain is MGWPPAQKPEDSKEEHGGPAQTDVCATQVSEEFPGSCADEVLSSGSISFSGELQSYSHTSESPVETKTPTTSSEEQDEQSELSLLQKDENKLSEMWINHLKSKEIHSERSQPDRRLPPEIPKESAEELDALQSFCTKKVNLIHQRQDLRAKKSNRPKRLQLRWIAETSEVDAFNCTIPDELWNRIYLENTRATLAYIGAITQHISSQCPSCNSKRAELAQSDFLRRRKTLLQSLLLQEKIDEHLHTTDFLTRVGEAHQGFPRLSDDPRIIWKRLTEKMLKGSSGFGRAYSKQV.

2 disordered regions span residues 1-23 (MGWP…AQTD) and 52-83 (ELQS…SELS). Residues 8 to 17 (KPEDSKEEHG) show a composition bias toward basic and acidic residues. Residues 52–71 (ELQSYSHTSESPVETKTPTT) are compositionally biased toward polar residues.

This is an uncharacterized protein from Mus musculus (Mouse).